Here is a 346-residue protein sequence, read N- to C-terminus: Inner membrane protein YnjI (346 aa).

Topologically, residues 1 to 38 (MKKVLLQNHPGSEKYSFNGWEIFNSNFERMIKENKAML) are periplasmic. A helical membrane pass occupies residues 39 to 59 (LCKWGFYLTCVVAVMFVFAAI). The Cytoplasmic segment spans residues 60 to 68 (TSNGLNERG). The chain crosses the membrane as a helical span at residues 69–89 (LITAGCSFLYLLIMMGLIVRA). Residues 90–234 (GFKAKKEQLH…DCANHSSGKS (145 aa)) are Periplasmic-facing. A helical membrane pass occupies residues 235 to 255 (SAKLIWAAELSWMISISSTAF). At 256-346 (QNGTIEEELA…PWGASSVKYS (91 aa)) the chain is on the cytoplasmic side.

The protein localises to the cell inner membrane. The sequence is that of Inner membrane protein YnjI (ynjI) from Escherichia coli (strain K12).